A 150-amino-acid polypeptide reads, in one-letter code: Catabolic 3-dehydroquinase 2 (150 aa).

Tyr23 (proton acceptor) is an active-site residue. Asn74, His80, and Asp87 together coordinate substrate. His100 acts as the Proton donor in catalysis. Substrate is bound by residues 101–102 (IT) and Arg111.

The protein belongs to the type-II 3-dehydroquinase family. Homododecamer. Adopts a ring-like structure, composed of an arrangement of two hexameric rings stacked on top of one another.

It catalyses the reaction 3-dehydroquinate = 3-dehydroshikimate + H2O. The protein operates within aromatic compound metabolism; 3,4-dihydroxybenzoate biosynthesis; 3,4-dihydroxybenzoate from 3-dehydroquinate: step 1/2. Its function is as follows. Is involved in the catabolism of quinate. Allows the utilization of quinate as carbon source via the beta-ketoadipate pathway. The chain is Catabolic 3-dehydroquinase 2 from Neosartorya fischeri (strain ATCC 1020 / DSM 3700 / CBS 544.65 / FGSC A1164 / JCM 1740 / NRRL 181 / WB 181) (Aspergillus fischerianus).